The following is a 283-amino-acid chain: Pantothenate synthetase (283 aa).

Position 30 to 37 (30 to 37 (MGYLHDGH)) interacts with ATP. H37 (proton donor) is an active-site residue. Residue Q61 coordinates (R)-pantoate. Residue Q61 participates in beta-alanine binding. 147-150 (GKKD) contacts ATP. Q153 contributes to the (R)-pantoate binding site. ATP contacts are provided by residues I176 and 184 to 187 (MSSR).

It belongs to the pantothenate synthetase family. Homodimer.

The protein localises to the cytoplasm. It carries out the reaction (R)-pantoate + beta-alanine + ATP = (R)-pantothenate + AMP + diphosphate + H(+). The protein operates within cofactor biosynthesis; (R)-pantothenate biosynthesis; (R)-pantothenate from (R)-pantoate and beta-alanine: step 1/1. Functionally, catalyzes the condensation of pantoate with beta-alanine in an ATP-dependent reaction via a pantoyl-adenylate intermediate. This chain is Pantothenate synthetase, found in Geobacter sulfurreducens (strain ATCC 51573 / DSM 12127 / PCA).